Reading from the N-terminus, the 116-residue chain is Large ribosomal subunit protein uL24 (116 aa).

This sequence belongs to the universal ribosomal protein uL24 family. As to quaternary structure, part of the 50S ribosomal subunit.

Functionally, one of two assembly initiator proteins, it binds directly to the 5'-end of the 23S rRNA, where it nucleates assembly of the 50S subunit. In terms of biological role, located at the polypeptide exit tunnel on the outside of the subunit. The chain is Large ribosomal subunit protein uL24 from Methanothrix thermoacetophila (strain DSM 6194 / JCM 14653 / NBRC 101360 / PT) (Methanosaeta thermophila).